The following is a 250-amino-acid chain: DNA repair protein RecO (250 aa).

The protein belongs to the RecO family.

In terms of biological role, involved in DNA repair and RecF pathway recombination. The polypeptide is DNA repair protein RecO (Syntrophobacter fumaroxidans (strain DSM 10017 / MPOB)).